A 217-amino-acid chain; its full sequence is Pyridoxine/pyridoxamine 5'-phosphate oxidase (217 aa).

Residues 13–16 and K71 each bind substrate; that span reads RREY. FMN-binding positions include 66-71, 81-82, R87, K88, and Q110; these read RTVLLK and YT. 3 residues coordinate substrate: Y128, R132, and S136. FMN-binding positions include 145-146 and W190; that span reads QS. 196–198 is a substrate binding site; the sequence is RLH. R200 is a binding site for FMN.

This sequence belongs to the pyridoxamine 5'-phosphate oxidase family. Homodimer. FMN is required as a cofactor.

The catalysed reaction is pyridoxamine 5'-phosphate + O2 + H2O = pyridoxal 5'-phosphate + H2O2 + NH4(+). The enzyme catalyses pyridoxine 5'-phosphate + O2 = pyridoxal 5'-phosphate + H2O2. The protein operates within cofactor metabolism; pyridoxal 5'-phosphate salvage; pyridoxal 5'-phosphate from pyridoxamine 5'-phosphate: step 1/1. It functions in the pathway cofactor metabolism; pyridoxal 5'-phosphate salvage; pyridoxal 5'-phosphate from pyridoxine 5'-phosphate: step 1/1. In terms of biological role, catalyzes the oxidation of either pyridoxine 5'-phosphate (PNP) or pyridoxamine 5'-phosphate (PMP) into pyridoxal 5'-phosphate (PLP). The chain is Pyridoxine/pyridoxamine 5'-phosphate oxidase from Rubrobacter xylanophilus (strain DSM 9941 / JCM 11954 / NBRC 16129 / PRD-1).